Reading from the N-terminus, the 1039-residue chain is RNA-binding protein Unr (1039 aa).

Positions 49–62 are enriched in polar residues; it reads TTLGLQPQGQGPSP. 2 disordered regions span residues 49-126 and 165-184; these read TTLG…QQQH and SIFG…PSQT. Low complexity-rich tracts occupy residues 63–80, 89–126, and 165–182; these read QQQQ…QHQQ, QQHM…QQQH, and SIFG…ADPS. The CSD 1 domain occupies 186–250; that stretch reads RETGIIEKLL…GKPIASQVSK (65 aa). Residues 261–337 enclose the CSD 2; degenerate domain; sequence RVTGTVTTEL…GNLGACHIRL (77 aa). Residues 345-413 enclose the CSD 3 domain; that stretch reads KYRGVVCSMK…GREFACNITR (69 aa). The 76-residue stretch at 428–503 folds into the CSD 4; degenerate domain; that stretch reads VYKGQVLKSL…RDQLQRATSI (76 aa). In terms of domain architecture, CSD 5 spans 517–585; sequence REQGTIASLK…SRLQAIRIKH (69 aa). One can recognise a CSD 6; degenerate domain in the interval 593–673; sequence FETLVASNIE…KECIAVNVQQ (81 aa). A disordered region spans residues 721-741; it reads QNGYVMHGSPGGSTSSVGSNN. The segment covering 732-741 has biased composition (low complexity); the sequence is GSTSSVGSNN. Positions 763–831 constitute a CSD 7 domain; that stretch reads VYRGFIAVMK…NCLPAENVRM (69 aa). One can recognise a CSD 8; degenerate domain in the interval 846-919; the sequence is THNGVVARPL…SGRAACVNAV (74 aa). One can recognise a CSD 9 domain in the interval 922–987; that stretch reads KKRATVDSIK…GKSSACNVLK (66 aa).

This sequence belongs to the UNR family. In terms of assembly, interacts with Sxl; cooperates with Sxl to prevent translation of msl-2 transcripts. Interacts with mle; promoting association between mle and roX2 non-coding RNA. Interacts (via CSD domain 7-9) with pAbp; promoting translation inhibition of msl-2 transcripts.

Its subcellular location is the cytoplasm. Its function is as follows. RNA-binding protein that acts as a regulator of dosage compensation in both males and females. In males, acts as positive regulator of dosage compensation by promoting assembly of the MSL complex, a multiprotein complex that mediates X-chromosome dosage compensation. Promotes MSL complex assembly via association with roX1 and roX2 non-coding RNA components of the MSL complex, facilitating the interaction between non-coding RNAs and mle. In females, acts as an inhibitor of dosage compensation together with Sxl by preventing production of msl-2 protein, an essential component of the MSL complex. Specifically binds to the 3'-UTR of msl-2 transcripts, and cooperates with Sxl to prevent translation initiation of msl-2 transcripts. Mechanistically, Sxl and Unr inhibit translation initiation by preventing ribosome recruitment after pAbp-mediated recruitment of the eIF4F complex. This chain is RNA-binding protein Unr, found in Drosophila melanogaster (Fruit fly).